Reading from the N-terminus, the 263-residue chain is Non-homologous end joining protein Ku 3 (263 aa).

In terms of domain architecture, Ku spans F6–R169.

Belongs to the prokaryotic Ku family. In terms of assembly, homodimer. Interacts with LigD.

In terms of biological role, with LigD forms a non-homologous end joining (NHEJ) DNA repair enzyme, which repairs dsDNA breaks with reduced fidelity. Binds linear dsDNA with 5'- and 3'- overhangs but not closed circular dsDNA nor ssDNA. Recruits and stimulates the ligase activity of LigD. This chain is Non-homologous end joining protein Ku 3, found in Saccharopolyspora erythraea (strain ATCC 11635 / DSM 40517 / JCM 4748 / NBRC 13426 / NCIMB 8594 / NRRL 2338).